The following is a 374-amino-acid chain: DNA integrity scanning protein DisA (374 aa).

A DAC domain is found at 20–158 (EALMRASLSA…DGERRVLEES (139 aa)). ATP contacts are provided by residues Gly-87, Leu-105, and 118–122 (TRHRT).

This sequence belongs to the DisA family. Homooctamer. Mg(2+) is required as a cofactor.

It catalyses the reaction 2 ATP = 3',3'-c-di-AMP + 2 diphosphate. In terms of biological role, participates in a DNA-damage check-point that is active prior to asymmetric division when DNA is damaged. DisA forms globular foci that rapidly scan along the chromosomes during sporulation, searching for lesions. When a lesion is present, DisA pauses at the lesion site. This triggers a cellular response that culminates in a temporary block in sporulation initiation. Its function is as follows. Also has diadenylate cyclase activity, catalyzing the condensation of 2 ATP molecules into cyclic di-AMP (c-di-AMP). c-di-AMP acts as a signaling molecule that couples DNA integrity with progression of sporulation. The rise in c-di-AMP level generated by DisA while scanning the chromosome, operates as a positive signal that advances sporulation; upon encountering a lesion, the DisA focus arrests at the damaged site and halts c-di-AMP synthesis. The protein is DNA integrity scanning protein DisA of Streptomyces griseus subsp. griseus (strain JCM 4626 / CBS 651.72 / NBRC 13350 / KCC S-0626 / ISP 5235).